A 132-amino-acid polypeptide reads, in one-letter code: MATKVAEIKTLKQGKYLVLGGEASKITSISTSSPGKHGAAKARIEAVGIFDNQKRSLVKPVNAKVDIPIIDKRVGQVLAIMGEEVQLMDLETYETIDLPIPEDLKGDIAEGKEVEYIEAMGNMKIMRTKGGN.

K36 carries the post-translational modification Hypusine.

Belongs to the eIF-5A family.

The protein localises to the cytoplasm. Functionally, functions by promoting the formation of the first peptide bond. This Methanosphaera stadtmanae (strain ATCC 43021 / DSM 3091 / JCM 11832 / MCB-3) protein is Translation initiation factor 5A.